Reading from the N-terminus, the 262-residue chain is UPF0758 protein BTH_I0781 (262 aa).

Positions 1–45 (MQYEIVSAGENVGDEPERERPVAQAAAAPGIPRPAALPAAGAARR) are disordered. The span at 22-43 (VAQAAAAPGIPRPAALPAAGAA) shows a compositional bias: low complexity. The MPN domain occupies 140–262 (LVDSPGAVDD…TFSFAQAGWI (123 aa)). Zn(2+) is bound by residues His-211, His-213, and Asp-224. Positions 211-224 (HNHPSGAVRPSAAD) match the JAMM motif motif.

This sequence belongs to the UPF0758 family.

In Burkholderia thailandensis (strain ATCC 700388 / DSM 13276 / CCUG 48851 / CIP 106301 / E264), this protein is UPF0758 protein BTH_I0781.